We begin with the raw amino-acid sequence, 517 residues long: Rop guanine nucleotide exchange factor 9 (517 aa).

Disordered regions lie at residues 16–76 (NLDR…SETE) and 428–517 (GEET…KDRH). Positions 39–63 (MPESQTQDSLGGSPVETSRPMTSRL) are enriched in polar residues. One can recognise a PRONE domain in the interval 65–429 (SRRQDKQQSE…SLARKQCTGE (365 aa)). Basic and acidic residues predominate over residues 66-76 (RRQDKQQSETE). Residues 440–452 (ETDSASAGSSNYS) are compositionally biased toward polar residues.

Interacts with ARAC11/ROP1 and ARAC10/ROP11. Interacts with PRK6. In terms of tissue distribution, expressed in pollen grains and pollen tubes.

It localises to the cell membrane. Its function is as follows. Guanine-nucleotide exchange factor (GEF) that acts as an activator of Rop (Rho of plants) GTPases by promoting the exchange of GDP for GTP. In Arabidopsis thaliana (Mouse-ear cress), this protein is Rop guanine nucleotide exchange factor 9.